Reading from the N-terminus, the 118-residue chain is MRAKDLLGRRGEELAAGYLESQGMRIVDRNWRCSEGEIDIVALDGDSLVIAEVKTRKSLAYGHPFEAVGVAKLARLHRLASAWCRDHELRMPCRRVDVVAVLDDGAGQPRVEHLRGVG.

The protein belongs to the UPF0102 family.

The polypeptide is UPF0102 protein Arth_2474 (Arthrobacter sp. (strain FB24)).